A 394-amino-acid chain; its full sequence is Glycogen synthase kinase 1 (394 aa).

The Protein kinase domain maps to 35-318; the sequence is YTQCKIVGNG…AIDAMVHPFF (284 aa). ATP-binding positions include 41 to 49 and lysine 64; that span reads VGNGSFGVV.

This sequence belongs to the protein kinase superfamily. CMGC Ser/Thr protein kinase family. GSK-3 subfamily.

Its subcellular location is the cytoplasm. It carries out the reaction L-seryl-[protein] + ATP = O-phospho-L-seryl-[protein] + ADP + H(+). Its function is as follows. Protein kinase that acts downstream of the MPS1 MAPK cascade as a highly conservative signal modulator that dictates growth, conidiation and pathogenicity. Phosphorylates HAT1 at 'Ser-8' to block its translocation from the nucleus to the cytoplasm where HAT1 positively regulates appressorium development and pathogenicity. The chain is Glycogen synthase kinase 1 from Pyricularia oryzae (Rice blast fungus).